Here is a 675-residue protein sequence, read N- to C-terminus: Mitochondrial distribution and morphology protein 12 (675 aa).

One can recognise an SMP-LTD domain in the interval 1–675; that stretch reads MSIDLNWDTV…VYPSFWTFLV (675 aa). Disordered regions lie at residues 66–186, 241–270, 307–327, 365–390, and 444–517; these read LPDF…GTNH, GPSW…GAGG, GTGK…PLGT, TGPR…VAPA, and PKQG…RFRE. Residues 78–101 show a composition bias toward acidic residues; the sequence is SSEESDSEEEVAYENEGEYLDDPV. A compositionally biased stretch (low complexity) spans 123–137; sequence NSSTGSRNGSGPNSG. Over residues 261–270 the composition is skewed to gly residues; the sequence is GGAGGGGAGG. Low complexity predominate over residues 317 to 327; sequence PLTGTSTPLGT. 2 stretches are compositionally biased toward polar residues: residues 373 to 382 and 454 to 469; these read PSSQSLNSVG and VSTL…NNRA. A compositionally biased stretch (acidic residues) spans 497 to 510; it reads EPEEDEEEEEEGEE.

This sequence belongs to the MDM12 family. In terms of assembly, component of the ER-mitochondria encounter structure (ERMES) or MDM complex, composed of mmm-1, mdm10, mdm12 and mdm34. A mmm-1 homodimer associates with one molecule of mdm12 on each side in a pairwise head-to-tail manner, and the SMP-LTD domains of mmm-1 and mdm12 generate a continuous hydrophobic tunnel for phospholipid trafficking.

It localises to the mitochondrion outer membrane. The protein resides in the endoplasmic reticulum membrane. Functionally, component of the ERMES/MDM complex, which serves as a molecular tether to connect the endoplasmic reticulum (ER) and mitochondria. Components of this complex are involved in the control of mitochondrial shape and protein biogenesis, and function in nonvesicular lipid trafficking between the ER and mitochondria. Mdm12 is required for the interaction of the ER-resident membrane protein MMM1 and the outer mitochondrial membrane-resident beta-barrel protein mdm10. The mdm12-mmm-1 subcomplex functions in the major beta-barrel assembly pathway that is responsible for biogenesis of all mitochondrial outer membrane beta-barrel proteins, and acts in a late step after the SAM complex. The mdm10-mdm12-mmm-1 subcomplex further acts in the TOM40-specific pathway after the action of the mdm12-mmm1 complex. Essential for establishing and maintaining the structure of mitochondria and maintenance of mtDNA nucleoids. The protein is Mitochondrial distribution and morphology protein 12 of Neurospora crassa (strain ATCC 24698 / 74-OR23-1A / CBS 708.71 / DSM 1257 / FGSC 987).